Reading from the N-terminus, the 620-residue chain is MELLVLTVLLMGTGCISAPWAAWMPPKMAALSGTCVQLPCRFDYPEELRPASIGGLWYFGSPYPKNYPPVVARSRPSSAVHESFAGRASFLGDPTGRDCTLNIARLSEELAGKYYFRGDLGGYNQYSFSEHAELDVWAAPHLEVPHELVAGSEAEILCRVPDNCPPLRPLLTWTGTEELLDPIGKERIEDDLGSKSLLGSLRFRPRKEDLGRRVGCGVTFINSSLSFQADVGLDVQYEPQVVGLWGPTEVVEGSDVELGCEAEGRPAPLISWFRGSEVLREEPGRNLRLLLSNVGPDDGGSFSCVAENRHGRHNRSLQLRVAYAPRAPVINGSLWVVSGDPVSVTCRAESEPAAILTVLRGGKVMAAAIYEDHVTMEMRPARPEDGGTYSCVAENQHGASSTSFNISVEYPPLVLPASRCTAGGDGVRCVCMVNSIPDSSLVFELPTRNQTVSDGHRDFTAAPPGSDGSITGILTLRGPLEPRLLVLCAARNRHGTTARQLRFHHPGGLVWAKVGPVGAVVAFAIVIAVVCYLSQSRRKKGAGSPEVTPVQPMAGPGGDPDLDLRPQQVRWLRGAMERWALGVKEGSGAPQEVTPTSHPPMKPTRGPLEDPPEYAEIRVK.

The first 17 residues, 1-17 (MELLVLTVLLMGTGCIS), serve as a signal peptide directing secretion. The Extracellular segment spans residues 18–516 (APWAAWMPPK…GGLVWAKVGP (499 aa)). Positions 28–106 (MAALSGTCVQ…RDCTLNIARL (79 aa)) constitute an Ig-like V-type domain. 3 cysteine pairs are disulfide-bonded: Cys-35/Cys-164, Cys-40/Cys-99, and Cys-158/Cys-216. Arg-117 contributes to the N-acetylneuraminate binding site. Ig-like C2-type domains follow at residues 151–233 (GSEA…DVGL), 239–322 (PQVV…LRVA), 325–407 (PRAP…FNIS), and 414–495 (VLPA…NRHG). Asn-222 carries an N-linked (GlcNAc...) asparagine glycan. Cys-260 and Cys-304 form a disulfide bridge. 2 N-linked (GlcNAc...) asparagine glycosylation sites follow: Asn-314 and Asn-331. Cys-346 and Cys-391 form a disulfide bridge. Asn-405 carries an N-linked (GlcNAc...) asparagine glycan. Intrachain disulfides connect Cys-420-Cys-429 and Cys-431-Cys-488. Asn-449 carries an N-linked (GlcNAc...) asparagine glycan. A helical membrane pass occupies residues 517 to 536 (VGAVVAFAIVIAVVCYLSQS). Residues 537-620 (RRKKGAGSPE…PPEYAEIRVK (84 aa)) are Cytoplasmic-facing. Disordered stretches follow at residues 539–562 (KKGAGSPEVTPVQPMAGPGGDPDL) and 583–620 (VKEGSGAPQEVTPTSHPPMKPTRGPLEDPPEYAEIRVK).

This sequence belongs to the immunoglobulin superfamily. SIGLEC (sialic acid binding Ig-like lectin) family. As to expression, exclusively expressed by myelinating and nonmyelinating Schwann cells and oligodendrocytes.

The protein localises to the membrane. The protein is Schwann cell myelin protein (SMP) of Coturnix japonica (Japanese quail).